Consider the following 130-residue polypeptide: Small ribosomal subunit protein uS8 (130 aa).

It belongs to the universal ribosomal protein uS8 family. In terms of assembly, part of the 30S ribosomal subunit. Contacts proteins S5 and S12.

One of the primary rRNA binding proteins, it binds directly to 16S rRNA central domain where it helps coordinate assembly of the platform of the 30S subunit. This is Small ribosomal subunit protein uS8 from Pseudomonas putida (strain ATCC 700007 / DSM 6899 / JCM 31910 / BCRC 17059 / LMG 24140 / F1).